Reading from the N-terminus, the 302-residue chain is Bacteriochlorophyll synthase 33 kDa chain (302 aa).

9 helical membrane-spanning segments follow: residues 25 to 45 (ITWF…GIWP), 49 to 69 (WPLV…MSQA), 97 to 117 (WGLY…WMLG), 119 to 139 (WGFG…VEPI), 145 to 165 (GWWG…FTGA), 166 to 186 (AVLS…LYAF), 223 to 243 (LACT…VIWG), 246 to 266 (IHAG…RVLL), and 275 to 295 (WYNG…AFAI).

It is found in the cell membrane. The protein operates within porphyrin-containing compound metabolism; bacteriochlorophyll biosynthesis (light-independent). Catalyzes the esterification of bacteriochlorophyllide a by geranylgeraniol-PPi. The chain is Bacteriochlorophyll synthase 33 kDa chain (bchG) from Cereibacter sphaeroides (strain ATCC 17023 / DSM 158 / JCM 6121 / CCUG 31486 / LMG 2827 / NBRC 12203 / NCIMB 8253 / ATH 2.4.1.) (Rhodobacter sphaeroides).